Consider the following 434-residue polypeptide: MNAVLENIENSEARFRFTIDYKVFADALEKTYRKNKKNYQVAGFRKGNVPRSVIESQYGPTVFYQEALDLIMTEEYKKAVESLALNTIGDPDIEVGEIEKGQELSVKASVPVVPEVTLGQLEGIEVVMPKAREVKERDIDKVLEELQYKNKKITDKEIAPAEKGDTVTVDYDCELDGTKFEPVVDYKALLDDSSDTMGFEGQLEGAQKGDILDIKKVLPHDHPQPQIAGKTACFKVTVKKVERIEILPLDDAFAQKVGNVSTMEEFRAEIKKNLEQAAAQRVQMQRNNAILSELFKRCQVKIPESLIMQRAMSMLEQFSGQLEAEGGTLDLYLQLINKKSGDFKREVWEDAENSLKADYILDKIIKEKGYTVSEEELNQGCEKFALSINMSPENARQKLGPLVHKVEHDLKAEKAFQYLLEHAVIREDNGDKTA.

Residues 164–247 form the PPIase FKBP-type domain; the sequence is GDTVTVDYDC…VKKVERIEIL (84 aa).

Belongs to the FKBP-type PPIase family. Tig subfamily.

The protein localises to the cytoplasm. It carries out the reaction [protein]-peptidylproline (omega=180) = [protein]-peptidylproline (omega=0). In terms of biological role, involved in protein export. Acts as a chaperone by maintaining the newly synthesized protein in an open conformation. Functions as a peptidyl-prolyl cis-trans isomerase. This is Trigger factor 2 from Desulfitobacterium hafniense (strain Y51).